The chain runs to 203 residues: MARFRGSITKVSRRLGVALAPKAEKYLERRPYAPGEHGQSRRSKISEYALQLREKQKMKFLYGVLEKQFRNYYKKAVAQRGVTGDNLVKLLERRFDNVVFRAGFSPSRAGARQLVTHGHMLVNGRKVNIPSFLMKPGDAIEFREKSKNMDAVTESLNKAPESRIPSWIQVDKAHQKAVFLTVPEREEVQEPFNEQLVVELYSK.

In terms of domain architecture, S4 RNA-binding spans 93–154; that stretch reads RRFDNVVFRA…KSKNMDAVTE (62 aa).

The protein belongs to the universal ribosomal protein uS4 family. As to quaternary structure, part of the 30S ribosomal subunit. Contacts protein S5. The interaction surface between S4 and S5 is involved in control of translational fidelity.

Functionally, one of the primary rRNA binding proteins, it binds directly to 16S rRNA where it nucleates assembly of the body of the 30S subunit. In terms of biological role, with S5 and S12 plays an important role in translational accuracy. The sequence is that of Small ribosomal subunit protein uS4 from Prosthecochloris aestuarii (strain DSM 271 / SK 413).